The following is a 529-amino-acid chain: MAYLGVDTSRIAGTQPLEMLLVSSGSPDPHSTIIIDPRTGVSSWSYKGSELQGASTGLVEPLGHDGEHVVITTKERPLVHVLAVHPKDRFHQKCVLPGPVSAIVSDNSGHFVFMSIKRQLYCWLLSTGELLSVIDAHYQNITKIVISDDDSMIFTASKDGAVHGYLVTDLVSADRDHTVAPFRKWASHTLSISDLKITNGSNPRVLSAGADHIACLHSISMDSVILKASSDRPLTACAIDPAETRIFIGTEVGNIAQINLFQLAPEERDLLVQAGDEHNTKFRVLNGHSDEISRLAINTDGTLLASGDASGKYCIWEISSHQCLKVSTMRSVINTLRFIPFWKTISGGEHVAKFRPVWDLKREPTKCDRFAIEVSTEFNSDQKHWNDVIEETIDQLLLESGSKSSAQLQWDAEGPARNEAAKAEKAAENTIKNIITLGDDEDDAPEVGNQRRKSGKKNKKNRKNQKKNDFEAAVIEKKQVEPIVIDDEEEVNSSLQKKFDALKAENEKLKEINKQMYEFVAKEIVDSEK.

WD repeat units lie at residues 136–175 (AHYQ…SADR) and 287–326 (GHSD…CLKV). The stretch at 416–518 (ARNEAAKAEK…LKEINKQMYE (103 aa)) forms a coiled coil. The segment at 436-470 (TLGDDEDDAPEVGNQRRKSGKKNKKNRKNQKKNDF) is disordered. The segment covering 450–465 (QRRKSGKKNKKNRKNQ) has biased composition (basic residues).

It belongs to the WD repeat IPI3/WDR18 family. Component of the PELP1 complex, composed of at least PELP1, TEX10 and WDR18. The complex interacts with pre-60S ribosome particles.

It is found in the nucleus. The protein resides in the nucleolus. It localises to the nucleoplasm. In terms of biological role, component of the PELP1 complex involved in the nucleolar steps of 28S rRNA maturation and the subsequent nucleoplasmic transit of the pre-60S ribosomal subunit. Required for processing ITS2 sequences from rRNA intermediates during 26S rRNA maturation. Required in the soma to promote normal proliferation and prevent germline tumor formation. This Caenorhabditis elegans protein is Pre-rRNA-processing protein pro-1.